We begin with the raw amino-acid sequence, 509 residues long: Steroid 17-alpha-hydroxylase/17,20 lyase (509 aa).

C445 contributes to the heme binding site.

This sequence belongs to the cytochrome P450 family. Requires heme as cofactor.

The protein resides in the membrane. The catalysed reaction is a C21-steroid + reduced [NADPH--hemoprotein reductase] + O2 = a 17alpha-hydroxy-C21-steroid + oxidized [NADPH--hemoprotein reductase] + H2O + H(+). It catalyses the reaction 17alpha-hydroxyprogesterone + reduced [NADPH--hemoprotein reductase] + O2 = androst-4-ene-3,17-dione + acetate + oxidized [NADPH--hemoprotein reductase] + H2O + 2 H(+). It carries out the reaction 17alpha-hydroxypregnenolone + reduced [NADPH--hemoprotein reductase] + O2 = 3beta-hydroxyandrost-5-en-17-one + acetate + oxidized [NADPH--hemoprotein reductase] + H2O + 2 H(+). The protein operates within lipid metabolism; steroid biosynthesis. In terms of biological role, conversion of pregnenolone and progesterone to their 17-alpha-hydroxylated products and subsequently to dehydroepiandrosterone (DHEA) and androstenedione. Catalyzes both the 17-alpha-hydroxylation and the 17,20-lyase reaction. This chain is Steroid 17-alpha-hydroxylase/17,20 lyase (CYP17A1), found in Squalus acanthias (Spiny dogfish).